We begin with the raw amino-acid sequence, 405 residues long: L-rhamnonate dehydratase (405 aa).

The substrate site is built by His-33 and Arg-59. Asp-226, Glu-252, and Glu-280 together coordinate Mg(2+). Catalysis depends on His-329, which acts as the Proton acceptor. Glu-349 provides a ligand contact to substrate.

The protein belongs to the mandelate racemase/muconate lactonizing enzyme family. RhamD subfamily. As to quaternary structure, homooctamer; tetramer of dimers. Mg(2+) serves as cofactor.

It carries out the reaction L-rhamnonate = 2-dehydro-3-deoxy-L-rhamnonate + H2O. Catalyzes the dehydration of L-rhamnonate to 2-keto-3-deoxy-L-rhamnonate (KDR). This chain is L-rhamnonate dehydratase, found in Escherichia coli O45:K1 (strain S88 / ExPEC).